The sequence spans 115 residues: U3-lycotoxin-Ls1o (115 aa).

The first 20 residues, 1–20 (MKFVLLFGVLLVTLFSYSSA), serve as a signal peptide directing secretion. Residues 21-44 (EMLDDFDQADEDELLSLIEKEEAR) constitute a propeptide that is removed on maturation. Disulfide bonds link Cys48–Cys63, Cys55–Cys72, Cys62–Cys87, and Cys74–Cys85.

It belongs to the neurotoxin 19 (CSTX) family. 01 subfamily. As to expression, expressed by the venom gland.

The protein localises to the secreted. In Lycosa singoriensis (Wolf spider), this protein is U3-lycotoxin-Ls1o.